The primary structure comprises 94 residues: Conotoxin Cal22a (94 aa).

An N-terminal signal peptide occupies residues 1-24 (MMSTKGITLFLCLLLLALATSVNG). Positions 25 to 44 (GQGTRRSRMTRALHGGRPSA) are excised as a propeptide.

Post-translationally, contains 4 disulfide bonds. In terms of tissue distribution, expressed by the venom duct.

It localises to the secreted. In terms of biological role, probable neurotoxin with unknown target. Possibly targets ion channels. The protein is Conotoxin Cal22a of Californiconus californicus (California cone).